Reading from the N-terminus, the 476-residue chain is Bifunctional protein HldE (476 aa).

The interval 1-318 is ribokinase; sequence MKLDLTVLEQ…YTALHGDKLA (318 aa). 195-198 lines the ATP pocket; sequence NLGE. Residue aspartate 264 is part of the active site. The tract at residues 344-476 is cytidylyltransferase; sequence MTNGCFDILH…MIDTILDREG (133 aa).

This sequence in the N-terminal section; belongs to the carbohydrate kinase PfkB family. It in the C-terminal section; belongs to the cytidylyltransferase family. As to quaternary structure, homodimer.

The catalysed reaction is D-glycero-beta-D-manno-heptose 7-phosphate + ATP = D-glycero-beta-D-manno-heptose 1,7-bisphosphate + ADP + H(+). It catalyses the reaction D-glycero-beta-D-manno-heptose 1-phosphate + ATP + H(+) = ADP-D-glycero-beta-D-manno-heptose + diphosphate. It participates in nucleotide-sugar biosynthesis; ADP-L-glycero-beta-D-manno-heptose biosynthesis; ADP-L-glycero-beta-D-manno-heptose from D-glycero-beta-D-manno-heptose 7-phosphate: step 1/4. The protein operates within nucleotide-sugar biosynthesis; ADP-L-glycero-beta-D-manno-heptose biosynthesis; ADP-L-glycero-beta-D-manno-heptose from D-glycero-beta-D-manno-heptose 7-phosphate: step 3/4. Its function is as follows. Catalyzes the phosphorylation of D-glycero-D-manno-heptose 7-phosphate at the C-1 position to selectively form D-glycero-beta-D-manno-heptose-1,7-bisphosphate. In terms of biological role, catalyzes the ADP transfer from ATP to D-glycero-beta-D-manno-heptose 1-phosphate, yielding ADP-D-glycero-beta-D-manno-heptose. In Chromohalobacter salexigens (strain ATCC BAA-138 / DSM 3043 / CIP 106854 / NCIMB 13768 / 1H11), this protein is Bifunctional protein HldE.